The chain runs to 313 residues: Protoheme IX farnesyltransferase (313 aa).

Helical transmembrane passes span 35–55 (LVIFTALVGLLLAPGYIHPVL), 56–76 (AFTSILCIAVGAGASGALNMW), 98–118 (VSKPEALTFGLVLSFFSVVTL), 120–140 (ILVNWFAAALLAFTIFFYVVI), 153–173 (IVIGGAAGALPPVVAWAAAAG), 180–200 (MLLFAIIFFWTPPHFWALALF), 226–246 (ILLYTIVLVAVAFAPWPLGYF), 248–268 (AIYGITSLALGGWMLLLTLRV), and 285–305 (FKFSILYLFALFAVLLLEVIV).

This sequence belongs to the UbiA prenyltransferase family. Protoheme IX farnesyltransferase subfamily.

The protein localises to the cell inner membrane. The catalysed reaction is heme b + (2E,6E)-farnesyl diphosphate + H2O = Fe(II)-heme o + diphosphate. Its pathway is porphyrin-containing compound metabolism; heme O biosynthesis; heme O from protoheme: step 1/1. In terms of biological role, converts heme B (protoheme IX) to heme O by substitution of the vinyl group on carbon 2 of heme B porphyrin ring with a hydroxyethyl farnesyl side group. This Rhodopseudomonas palustris (strain BisB18) protein is Protoheme IX farnesyltransferase.